A 174-amino-acid chain; its full sequence is Urease accessory protein UreE (174 aa).

This sequence belongs to the UreE family.

The protein localises to the cytoplasm. Functionally, involved in urease metallocenter assembly. Binds nickel. Probably functions as a nickel donor during metallocenter assembly. The protein is Urease accessory protein UreE of Helicobacter hepaticus (strain ATCC 51449 / 3B1).